Reading from the N-terminus, the 884-residue chain is DNA mismatch repair protein MutS (884 aa).

ATP is bound at residue 651 to 658 (GPNMSGKS). The interval 843 to 884 (LRNQGKSQPAQKNCKKEPAPNRSPDPAVGDQLSLIPAPLFPD) is disordered.

The protein belongs to the DNA mismatch repair MutS family.

In terms of biological role, this protein is involved in the repair of mismatches in DNA. It is possible that it carries out the mismatch recognition step. This protein has a weak ATPase activity. This chain is DNA mismatch repair protein MutS, found in Synechococcus sp. (strain JA-2-3B'a(2-13)) (Cyanobacteria bacterium Yellowstone B-Prime).